A 231-amino-acid polypeptide reads, in one-letter code: uncharacterized protein (231 aa).

Positions 4–116 constitute a Response regulatory domain; that stretch reads RILVVEDDED…ELHARVIAQL (113 aa). Asp52 is modified (4-aspartylphosphate). The ompR/PhoB-type DNA-binding region spans 129 to 230; that stretch reads EETFLIGGKL…EWGRGYRFGA (102 aa).

In terms of processing, phosphorylated by YrkQ.

It is found in the cytoplasm. Member of the two-component regulatory system YrkQ/YrkP. This is an uncharacterized protein from Bacillus subtilis (strain 168).